The sequence spans 328 residues: DNA-directed RNA polymerase subunit alpha (328 aa).

Residues 1–232 (MSTQGFLKPR…DQISVFAALE (232 aa)) form an alpha N-terminal domain (alpha-NTD) region. The tract at residues 248–328 (IDPVLLRPVD…NWPPLGLERP (81 aa)) is alpha C-terminal domain (alpha-CTD).

This sequence belongs to the RNA polymerase alpha chain family. Homodimer. The RNAP catalytic core consists of 2 alpha, 1 beta, 1 beta' and 1 omega subunit. When a sigma factor is associated with the core the holoenzyme is formed, which can initiate transcription.

The enzyme catalyses RNA(n) + a ribonucleoside 5'-triphosphate = RNA(n+1) + diphosphate. DNA-dependent RNA polymerase catalyzes the transcription of DNA into RNA using the four ribonucleoside triphosphates as substrates. The polypeptide is DNA-directed RNA polymerase subunit alpha (Bordetella avium (strain 197N)).